The sequence spans 347 residues: Intracellular hyaluronan-binding protein 4 (347 aa).

Disordered regions lie at residues Gly-39–Thr-221 and Phe-298–Ala-347. Composition is skewed to basic and acidic residues over residues Val-61–Thr-71, Pro-83–Lys-107, Arg-116–Ala-125, and Asp-146–Ser-174. Residues Glu-199 to Asp-213 show a composition bias toward acidic residues. Residues Gly-307–Gly-319 show a composition bias toward gly residues. Residues Asp-338–Ala-347 show a composition bias toward acidic residues.

This sequence belongs to the SERBP1-HABP4 family. In terms of assembly, associates with ribosomes; promoting ribosome stabilization. Interacts with eef2/eEF2; promoting ribosome stabilization.

The protein resides in the nucleus. It is found in the cytoplasm. It localises to the stress granule. Its subcellular location is the nucleolus. The protein localises to the nucleus speckle. The protein resides in the cajal body. Functionally, ribosome-binding protein that promotes ribosome hibernation, a process during which ribosomes are stabilized in an inactive state and preserved from proteasomal degradation. Acts via its association with eef2/eEF2 factor at the A-site of the ribosome, promoting ribosome stabilization in an inactive state compatible with storage. Plays a key role in ribosome hibernation in the mature egg by promoting ribosome stabilization. Ribosomes, which are produced in large quantities during oogenesis, are stored and translationally repressed in the egg and early embryo. This Danio rerio (Zebrafish) protein is Intracellular hyaluronan-binding protein 4.